The sequence spans 238 residues: Fatty acid metabolism regulator protein (238 aa).

The HTH gntR-type domain maps to 6–74 (KGPASFAEKY…HGKPTRVNNF (69 aa)). The segment at residues 34 to 53 (ERELSELIGVTRTTLREVLQ) is a DNA-binding region (H-T-H motif).

As to quaternary structure, homodimer.

It is found in the cytoplasm. Multifunctional regulator of fatty acid metabolism. The protein is Fatty acid metabolism regulator protein of Shewanella baltica (strain OS155 / ATCC BAA-1091).